The following is a 123-amino-acid chain: Small ribosomal subunit protein uS12cz/uS12cy (123 aa).

Belongs to the universal ribosomal protein uS12 family. As to quaternary structure, part of the 30S ribosomal subunit.

The protein resides in the plastid. Its subcellular location is the chloroplast. In terms of biological role, with S4 and S5 plays an important role in translational accuracy. Located at the interface of the 30S and 50S subunits. This is Small ribosomal subunit protein uS12cz/uS12cy (rps12-A) from Gossypium hirsutum (Upland cotton).